A 181-amino-acid polypeptide reads, in one-letter code: ATP-dependent protease subunit ClpQ (181 aa).

The active site involves Ser2. Residues Gly165, Cys168, and Thr171 each contribute to the Na(+) site.

A double ring-shaped homohexamer of ClpQ is capped on each side by a ring-shaped ClpY homohexamer. The assembly of the ClpQ/ClpY complex is dependent on binding of ATP.

Its subcellular location is the cytoplasm. Protease subunit of a proteasome-like degradation complex. This Bacillus subtilis (strain 168) protein is ATP-dependent protease subunit ClpQ (clpQ).